The chain runs to 135 residues: Large ribosomal subunit protein uL16c (135 aa).

This sequence belongs to the universal ribosomal protein uL16 family. Part of the 50S ribosomal subunit.

It is found in the plastid. The protein resides in the chloroplast. This chain is Large ribosomal subunit protein uL16c, found in Jasminum nudiflorum (Winter jasmine).